The following is a 201-amino-acid chain: Dephospho-CoA kinase (201 aa).

The 198-residue stretch at 4–201 (IIGITGGIAS…LEGGRQDDRD (198 aa)) folds into the DPCK domain. Residue 12–17 (ASGKST) coordinates ATP.

Belongs to the CoaE family.

The protein localises to the cytoplasm. The enzyme catalyses 3'-dephospho-CoA + ATP = ADP + CoA + H(+). It participates in cofactor biosynthesis; coenzyme A biosynthesis; CoA from (R)-pantothenate: step 5/5. In terms of biological role, catalyzes the phosphorylation of the 3'-hydroxyl group of dephosphocoenzyme A to form coenzyme A. The chain is Dephospho-CoA kinase from Streptococcus pneumoniae (strain ATCC BAA-255 / R6).